A 180-amino-acid chain; its full sequence is Pyruvate synthase subunit PorC (180 aa).

As to quaternary structure, heterotetramer of one alpha, one beta, one delta and one gamma chain.

It carries out the reaction 2 oxidized [2Fe-2S]-[ferredoxin] + pyruvate + CoA = 2 reduced [2Fe-2S]-[ferredoxin] + acetyl-CoA + CO2 + H(+). This chain is Pyruvate synthase subunit PorC (porC), found in Methanothermobacter thermautotrophicus (strain ATCC 29096 / DSM 1053 / JCM 10044 / NBRC 100330 / Delta H) (Methanobacterium thermoautotrophicum).